A 235-amino-acid polypeptide reads, in one-letter code: Class A basic helix-loop-helix protein 9 (235 aa).

Disordered regions lie at residues 1 to 69 (MLRG…RRMA) and 132 to 235 (GHLE…HPRS). Over residues 55 to 67 (RRRARPVRSKARR) the composition is skewed to basic residues. One can recognise a bHLH domain in the interval 65 to 117 (ARRMAANVRERKRILDYNEAFNALRRALRHDLGGKRLSKIATLRRAIHRIAAL).

In terms of assembly, heterodimer. Efficient DNA binding requires dimerization with another bHLH protein. Interacts with TCF3, TCF4, and TCF12.

It is found in the nucleus. The protein localises to the cytoplasm. Transcription factor, which play a role in limb development. Is an essential player in the regulatory network governing transcription of genes implicated in limb morphogenesis. The sequence is that of Class A basic helix-loop-helix protein 9 (BHLHA9) from Homo sapiens (Human).